Here is a 340-residue protein sequence, read N- to C-terminus: Guanine nucleotide-binding protein G(I)/G(S)/G(T) subunit beta-1 (340 aa).

WD repeat units follow at residues 53–83 (GHLA…IVWD), 95–125 (LRSS…SIYS), 141–170 (GHTG…ALWD), 182–212 (GHTG…KLWD), 224–254 (GHES…RLFD), 268–298 (NIIC…NVWD), and 310–340 (GHDN…KIWN).

Belongs to the WD repeat G protein beta family. As to quaternary structure, g proteins are composed of 3 units, alpha, beta and gamma.

Functionally, guanine nucleotide-binding proteins (G proteins) are involved as a modulator or transducer in various transmembrane signaling systems. The beta and gamma chains are required for the GTPase activity, for replacement of GDP by GTP, and for G protein-effector interaction. This is Guanine nucleotide-binding protein G(I)/G(S)/G(T) subunit beta-1 (GBETA1) from Homarus americanus (American lobster).